Consider the following 507-residue polypeptide: Glycerol kinase (507 aa).

Threonine 13 contacts ADP. ATP contacts are provided by threonine 13, threonine 14, and serine 15. Threonine 13 contacts sn-glycerol 3-phosphate. An ADP-binding site is contributed by arginine 17. Residues arginine 83, glutamate 84, tyrosine 135, and aspartate 245 each contribute to the sn-glycerol 3-phosphate site. Positions 83, 84, 135, 245, and 246 each coordinate glycerol. ADP is bound by residues threonine 267 and glycine 310. Residues threonine 267, glycine 310, glutamine 314, and glycine 411 each coordinate ATP. Glycine 411 and asparagine 415 together coordinate ADP.

This sequence belongs to the FGGY kinase family.

The enzyme catalyses glycerol + ATP = sn-glycerol 3-phosphate + ADP + H(+). The protein operates within polyol metabolism; glycerol degradation via glycerol kinase pathway; sn-glycerol 3-phosphate from glycerol: step 1/1. With respect to regulation, inhibited by fructose 1,6-bisphosphate (FBP). Its function is as follows. Key enzyme in the regulation of glycerol uptake and metabolism. Catalyzes the phosphorylation of glycerol to yield sn-glycerol 3-phosphate. The chain is Glycerol kinase from Halorhodospira halophila (strain DSM 244 / SL1) (Ectothiorhodospira halophila (strain DSM 244 / SL1)).